Reading from the N-terminus, the 151-residue chain is Regulatory protein RecX (151 aa).

It belongs to the RecX family.

Its subcellular location is the cytoplasm. Its function is as follows. Modulates RecA activity. The polypeptide is Regulatory protein RecX (Herminiimonas arsenicoxydans).